The chain runs to 532 residues: KICSTOR complex protein ITFG2 (532 aa).

The stretch at 19–48 (FPHAICLGDVDNDTLNELVVGDTSGKLSVY) is one FG-GAP 1; atypical repeat. Ser-104 is subject to Phosphoserine. One copy of the FG-GAP 2; atypical repeat lies at 126-155 (NTKVMLISDIDGDGRCELVVGYTDRVVRAF). The interval 248–271 (PHPQQERLHSPHRQHQASHSPDSS) is disordered.

As to quaternary structure, part of the KICSTOR complex composed of KPTN, ITFG2, KICS2 and SZT2. SZT2 probably serves as a link between the other three proteins in the KICSTOR complex and may mediate the direct interaction with the GATOR complex via GATOR1. The KICSTOR complex interacts directly with the GATOR1 complex and most probably indirectly with the GATOR2 complex in an amino acid-independent manner.

It localises to the lysosome membrane. In terms of biological role, as part of the KICSTOR complex functions in the amino acid-sensing branch of the TORC1 signaling pathway. Recruits, in an amino acid-independent manner, the GATOR1 complex to the lysosomal membranes and allows its interaction with GATOR2 and the RAG GTPases. Functions upstream of the RAG GTPases and is required to negatively regulate mTORC1 signaling in absence of amino acids. In absence of the KICSTOR complex mTORC1 is constitutively localized to the lysosome and activated. The KICSTOR complex is also probably involved in the regulation of mTORC1 by glucose. The protein is KICSTOR complex protein ITFG2 of Bos taurus (Bovine).